Here is a 473-residue protein sequence, read N- to C-terminus: Ribulose bisphosphate carboxylase large chain 2 (473 aa).

The substrate site is built by Asn116 and Thr166. The Proton acceptor role is filled by Lys168. Lys170 serves as a coordination point for substrate. Mg(2+)-binding residues include Lys194, Asp196, and Glu197. Position 194 is an N6-carboxylysine (Lys194). His287 functions as the Proton acceptor in the catalytic mechanism. Positions 288, 320, and 372 each coordinate substrate.

The protein belongs to the RuBisCO large chain family. Type I subfamily. In terms of assembly, heterohexadecamer of 8 large chains and 8 small chains. The cofactor is Mg(2+).

The catalysed reaction is 2 (2R)-3-phosphoglycerate + 2 H(+) = D-ribulose 1,5-bisphosphate + CO2 + H2O. It catalyses the reaction D-ribulose 1,5-bisphosphate + O2 = 2-phosphoglycolate + (2R)-3-phosphoglycerate + 2 H(+). Its function is as follows. RuBisCO catalyzes two reactions: the carboxylation of D-ribulose 1,5-bisphosphate, the primary event in carbon dioxide fixation, as well as the oxidative fragmentation of the pentose substrate. Both reactions occur simultaneously and in competition at the same active site. In Acidithiobacillus ferrooxidans (strain ATCC 23270 / DSM 14882 / CIP 104768 / NCIMB 8455) (Ferrobacillus ferrooxidans (strain ATCC 23270)), this protein is Ribulose bisphosphate carboxylase large chain 2.